The following is a 459-amino-acid chain: Serine permease SerP1 (459 aa).

12 helical membrane-spanning segments follow: residues 19–39 (IQLI…AGKT), 42–62 (MTGP…FFFL), 97–117 (SYWL…GTYI), 119–139 (FWLP…LLFG), 153–173 (FWFA…AIIL), 212–232 (FVGA…IGMT), 254–274 (ILLF…WHYI), 281–301 (FVIV…NFVV), 341–361 (AGIP…APVL), 370–390 (AFNF…FITL), 412–432 (PTIA…SLFF), and 436–456 (TFYP…YSHF).

It belongs to the amino acid-polyamine-organocation (APC) superfamily. Amino acid transporter (AAT) (TC 2.A.3.1) family.

It localises to the cell membrane. Its function is as follows. Transports L-serine, L-threonine and L-cysteine with high affinity. Stereoselective, with a strong preference for L-serine. Is the main L-serine transporter and is responsible for optimal growth in media containing free amino acids as the sole source of amino acids. Is also the main transporter for L-threonine. This is Serine permease SerP1 from Lactococcus lactis subsp. cremoris (strain MG1363).